Here is a 363-residue protein sequence, read N- to C-terminus: 2,5-diketocamphane 1,2-monooxygenase 2 (363 aa).

FMN contacts are provided by residues Met74 and 186–194 (TGLTKNSSS).

This sequence belongs to the bacterial luciferase oxidoreductase family. In terms of assembly, homodimer. Likely forms a loose transient complex with a P.putida flavin reductase that provides the required FMNH(2) to the enzyme.

The catalysed reaction is (1R,4R)-bornane-2,5-dione + FMNH2 + O2 = (1R,4R)-5-oxo-1,2-campholide + FMN + H2O + H(+). Its pathway is terpene metabolism; (R)-camphor degradation. In terms of biological role, involved in the degradation and assimilation of (+)-camphor, which allows P.putida strain NCIMB 10007 to grow on this enantiomer of camphor as the sole carbon source. Catalyzes the FMNH(2)-dependent lactonization of 2,5-diketocamphane via a Baeyer-Villiger oxidation to produce the unstable lactone 5-oxo-1,2-campholide with (R,R) configuration, that presumably undergoes spontaneous hydrolysis to form 2-oxo-Delta(3)-4,5,5-trimethylcyclopentenylacetate. Is also able to convert (+)-camphor and norcamphor to the corresponding lactone in vitro. Shows no conversion of (-)-camphor, (+)-fenchone, (-)-fenchone, and (+)-nopinone. Acts on other bicyclic ketones and, to a lesser extent, on some 2- and 4-substituted monocyclic ketones. This is 2,5-diketocamphane 1,2-monooxygenase 2 from Pseudomonas putida (Arthrobacter siderocapsulatus).